Here is a 94-residue protein sequence, read N- to C-terminus: Aspartyl/glutamyl-tRNA(Asn/Gln) amidotransferase subunit C (94 aa).

Belongs to the GatC family. Heterotrimer of A, B and C subunits.

The catalysed reaction is L-glutamyl-tRNA(Gln) + L-glutamine + ATP + H2O = L-glutaminyl-tRNA(Gln) + L-glutamate + ADP + phosphate + H(+). It catalyses the reaction L-aspartyl-tRNA(Asn) + L-glutamine + ATP + H2O = L-asparaginyl-tRNA(Asn) + L-glutamate + ADP + phosphate + 2 H(+). Its function is as follows. Allows the formation of correctly charged Asn-tRNA(Asn) or Gln-tRNA(Gln) through the transamidation of misacylated Asp-tRNA(Asn) or Glu-tRNA(Gln) in organisms which lack either or both of asparaginyl-tRNA or glutaminyl-tRNA synthetases. The reaction takes place in the presence of glutamine and ATP through an activated phospho-Asp-tRNA(Asn) or phospho-Glu-tRNA(Gln). The chain is Aspartyl/glutamyl-tRNA(Asn/Gln) amidotransferase subunit C from Syntrophomonas wolfei subsp. wolfei (strain DSM 2245B / Goettingen).